We begin with the raw amino-acid sequence, 176 residues long: Epididymal-specific lipocalin-9 (176 aa).

Residues 1–15 (MALLLLSLGLSLIAA) form the signal peptide. Asparagine 68 and asparagine 129 each carry an N-linked (GlcNAc...) asparagine glycan. Cysteine 83 and cysteine 161 are oxidised to a cystine.

It belongs to the calycin superfamily. Lipocalin family.

It is found in the secreted. In Homo sapiens (Human), this protein is Epididymal-specific lipocalin-9.